Here is a 401-residue protein sequence, read N- to C-terminus: E3 ubiquitin-protein ligase DA2 (401 aa).

An RING-type; degenerate zinc finger spans residues 59 to 102 (CPICFLYYPSLNRSRCCMKSICTECFLQMKNPNSARPTQCPFCK). Over residues 139-153 (KEMQDDEEKMQKRLE) the composition is skewed to basic and acidic residues. The tract at residues 139–164 (KEMQDDEEKMQKRLESCSSSTSAMTG) is disordered.

In terms of assembly, interacts with DA1 (via C-terminus).

The enzyme catalyses S-ubiquitinyl-[E2 ubiquitin-conjugating enzyme]-L-cysteine + [acceptor protein]-L-lysine = [E2 ubiquitin-conjugating enzyme]-L-cysteine + N(6)-ubiquitinyl-[acceptor protein]-L-lysine.. It functions in the pathway protein modification; protein ubiquitination. In terms of biological role, E3 ubiquitin-protein ligase involved in the regulation of organ and seed size. Acts synergistically with DA1 to regulate seed size. Functions synergistically with DA1 to restrict cell proliferation in the maternal integuments of ovules and developing seeds. Seems to function independently of BB. Possesses E3 ubiquitin-protein ligase activity in vitro. Polyubiquitinates DA1, DAR1 and DAR2, but not DAR3. The chain is E3 ubiquitin-protein ligase DA2 from Arabidopsis thaliana (Mouse-ear cress).